The sequence spans 250 residues: NADH-quinone oxidoreductase subunit C (250 aa).

Disordered regions lie at residues 1-33 (MSDD…PTGE) and 228-250 (LGGV…RSYN).

Belongs to the complex I 30 kDa subunit family. In terms of assembly, NDH-1 is composed of 14 different subunits. Subunits NuoB, C, D, E, F, and G constitute the peripheral sector of the complex.

It is found in the cell membrane. It catalyses the reaction a quinone + NADH + 5 H(+)(in) = a quinol + NAD(+) + 4 H(+)(out). NDH-1 shuttles electrons from NADH, via FMN and iron-sulfur (Fe-S) centers, to quinones in the respiratory chain. The immediate electron acceptor for the enzyme in this species is believed to be a menaquinone. Couples the redox reaction to proton translocation (for every two electrons transferred, four hydrogen ions are translocated across the cytoplasmic membrane), and thus conserves the redox energy in a proton gradient. The sequence is that of NADH-quinone oxidoreductase subunit C from Nocardioides sp. (strain ATCC BAA-499 / JS614).